A 116-amino-acid chain; its full sequence is Large ribosomal subunit protein bL20c (116 aa).

The protein belongs to the bacterial ribosomal protein bL20 family.

The protein localises to the plastid. It localises to the chloroplast. Binds directly to 23S ribosomal RNA and is necessary for the in vitro assembly process of the 50S ribosomal subunit. It is not involved in the protein synthesizing functions of that subunit. The sequence is that of Large ribosomal subunit protein bL20c (rpl20) from Marchantia polymorpha (Common liverwort).